A 154-amino-acid polypeptide reads, in one-letter code: RNA-binding protein PAB1135 (154 aa).

As to quaternary structure, homodimer in solution.

In vitro, binds efficiently double-stranded RNAs in a non-sequence specific manner. In Pyrococcus abyssi (strain GE5 / Orsay), this protein is RNA-binding protein PAB1135.